We begin with the raw amino-acid sequence, 633 residues long: Leucine-rich repeat and IQ domain-containing protein 3 (633 aa).

3 LRR repeats span residues 51–72 (SLRV…QGCK), 73–94 (KLIK…TFWN), and 98–119 (NLKL…CVLS). The 48-residue stretch at 132 to 179 (CPVSLKKGYRHVLVNSIWPLKALDHHVISDEEIIQNWHLPERFKTFSQ) folds into the LRRCT domain. Residues 215-244 (HNSPVLIIQRWIRGFIVRKHLSPYFTRKRH) form the IQ domain. Residues 322-343 (NSKQPRHHIQKGQNEMKSDSED) are disordered. Residues 556-616 (EKREKRKYKQ…AKVEFINTYY (61 aa)) are a coiled coil.

The chain is Leucine-rich repeat and IQ domain-containing protein 3 (Lrriq3) from Rattus norvegicus (Rat).